We begin with the raw amino-acid sequence, 624 residues long: Chaperone protein DnaK (624 aa).

Position 174 is a phosphothreonine; by autocatalysis (Thr174). Disordered regions lie at residues Ile470 to Val504 and Asn577 to Lys624. Residues Glu481 to Val504 show a composition bias toward basic and acidic residues. Over residues Asn577–Asp605 the composition is skewed to low complexity. A compositionally biased stretch (basic and acidic residues) spans Gly615–Lys624.

This sequence belongs to the heat shock protein 70 family.

Acts as a chaperone. The polypeptide is Chaperone protein DnaK (Lactobacillus johnsonii (strain CNCM I-12250 / La1 / NCC 533)).